Here is a 198-residue protein sequence, read N- to C-terminus: Na(+)-translocating NADH-quinone reductase subunit E (198 aa).

The next 6 membrane-spanning stretches (helical) occupy residues 11-31, 35-55, 77-97, 110-130, 140-160, and 176-196; these read AVFI…FLAV, VSPA…AVPV, FLNF…LEMV, GIFL…SFMV, IVYG…LAGL, and LGIT…FSGI.

Belongs to the NqrDE/RnfAE family. Composed of six subunits; NqrA, NqrB, NqrC, NqrD, NqrE and NqrF.

Its subcellular location is the cell inner membrane. The enzyme catalyses a ubiquinone + n Na(+)(in) + NADH + H(+) = a ubiquinol + n Na(+)(out) + NAD(+). NQR complex catalyzes the reduction of ubiquinone-1 to ubiquinol by two successive reactions, coupled with the transport of Na(+) ions from the cytoplasm to the periplasm. NqrA to NqrE are probably involved in the second step, the conversion of ubisemiquinone to ubiquinol. The protein is Na(+)-translocating NADH-quinone reductase subunit E of Haemophilus influenzae (strain ATCC 51907 / DSM 11121 / KW20 / Rd).